A 414-amino-acid chain; its full sequence is Na(+)-translocating NADH-quinone reductase subunit B (414 aa).

A run of 3 helical transmembrane segments spans residues 56–76 (IMIM…YNAG), 129–149 (FLPI…LFCM), and 164–184 (ILFA…LGIT). Thr-236 is subject to FMN phosphoryl threonine. 5 helical membrane-spanning segments follow: residues 268–288 (IPGS…AMIV), 297–317 (IIAG…VIGS), 325–345 (MPWH…FMAT), 358–378 (WWYG…NPAY), and 381–401 (GMML…HVVI).

It belongs to the NqrB/RnfD family. As to quaternary structure, composed of six subunits; NqrA, NqrB, NqrC, NqrD, NqrE and NqrF. It depends on FMN as a cofactor.

It is found in the cell inner membrane. It carries out the reaction a ubiquinone + n Na(+)(in) + NADH + H(+) = a ubiquinol + n Na(+)(out) + NAD(+). With respect to regulation, this reaction is tightly coupled to the Na(+) pumping activity and specifically requires Na(+) for activity. Inhibited by korormicin and 2-N-heptyl-4-hydroxyquinoline N-oxide (HQNO). Its function is as follows. NQR complex catalyzes the reduction of ubiquinone-1 to ubiquinol by two successive reactions, coupled with the transport of Na(+) ions from the cytoplasm to the periplasm. NqrA to NqrE are probably involved in the second step, the conversion of ubisemiquinone to ubiquinol. The chain is Na(+)-translocating NADH-quinone reductase subunit B from Vibrio alginolyticus.